We begin with the raw amino-acid sequence, 238 residues long: Flagellar L-ring protein (238 aa).

The N-terminal stretch at 1–16 (MRKLILISLCIFFLAS) is a signal peptide. The N-palmitoyl cysteine moiety is linked to residue C17. C17 is lipidated: S-diacylglycerol cysteine.

The protein belongs to the FlgH family. In terms of assembly, the basal body constitutes a major portion of the flagellar organelle and consists of four rings (L,P,S, and M) mounted on a central rod.

The protein resides in the cell outer membrane. It localises to the bacterial flagellum basal body. Functionally, assembles around the rod to form the L-ring and probably protects the motor/basal body from shearing forces during rotation. The sequence is that of Flagellar L-ring protein from Thermodesulfovibrio yellowstonii (strain ATCC 51303 / DSM 11347 / YP87).